A 743-amino-acid polypeptide reads, in one-letter code: Glycerol-3-phosphate O-acyltransferase 2 (743 aa).

At 1–34 the chain is on the lumenal side; sequence MSAPAADHNAAKPIPHVPQASRRYKNSYNGFVYN. A helical membrane pass occupies residues 35 to 55; it reads IHTWLYDVSVFLFNILFTIFF. The Cytoplasmic portion of the chain corresponds to 56–442; it reads REIKVRGAYN…TKLEALRCFV (387 aa). A helical transmembrane segment spans residues 443–457; the sequence is TLIVRLIKFSVFAIL. Residue Ser458 is a topological domain, lumenal. A helical membrane pass occupies residues 459 to 473; sequence LPGSILFTPIFIICR. Residues 474–501 lie on the Cytoplasmic side of the membrane; that stretch reads VYSEKKAKEGLKKSLVKIKGTDLLATWK. A helical membrane pass occupies residues 502 to 522; that stretch reads LIVALILAPILYVTYSILLII. The Lumenal portion of the chain corresponds to 523-531; it reads LARKQHYCR. A helical transmembrane segment spans residues 532–552; that stretch reads IWVPSNNAFIQFVYFYALLVF. The Cytoplasmic segment spans residues 553-743; the sequence is TTYSSLKTGE…RQKREHEKKE (191 aa). 9 positions are modified to phosphoserine: Ser632, Ser637, Ser647, Ser651, Ser654, Ser657, Ser664, Ser668, and Ser671. The residue at position 673 (Thr673) is a Phosphothreonine. The tract at residues 682 to 743 is disordered; sequence KQGQWKSEGE…RQKREHEKKE (62 aa). Ser688 bears the Phosphoserine mark. The segment covering 691 to 700 has biased composition (acidic residues); sequence ETSEDEDEFD. The residue at position 692 (Thr692) is a Phosphothreonine. Ser693 carries the post-translational modification Phosphoserine.

The protein belongs to the GPAT/DAPAT family. Post-translationally, phosphorylated at a conserved motif involving Ser-664, Ser-668 and Ser-671. This phosphorylation plays a critical role for efficient TAG mobilization. Phosphorylation deficiency at this motif increases the enzyme activity and consequently induces de novo formation of phosphatidic acid.

It localises to the lipid droplet. The protein resides in the endoplasmic reticulum membrane. The catalysed reaction is sn-glycerol 3-phosphate + an acyl-CoA = a 1-acyl-sn-glycero-3-phosphate + CoA. It catalyses the reaction dihydroxyacetone phosphate + an acyl-CoA = a 1-acylglycerone 3-phosphate + CoA. The enzyme catalyses sn-glycerol 3-phosphate + hexadecanoyl-CoA = 1-hexadecanoyl-sn-glycero-3-phosphate + CoA. It carries out the reaction (9Z)-hexadecenoyl-CoA + sn-glycerol 3-phosphate = 1-(9Z-hexadecenoyl)-sn-glycero-3-phosphate + CoA. The catalysed reaction is sn-glycerol 3-phosphate + octadecanoyl-CoA = 1-octadecanoyl-sn-glycero-3-phosphate + CoA. It catalyses the reaction sn-glycerol 3-phosphate + (9Z)-octadecenoyl-CoA = 1-(9Z-octadecenoyl)-sn-glycero-3-phosphate + CoA. It participates in phospholipid metabolism; CDP-diacylglycerol biosynthesis; CDP-diacylglycerol from sn-glycerol 3-phosphate: step 1/3. In terms of biological role, dual substrate-specific glycerol-3-phosphate/dihydroxyacetone phosphate sn-1 acyltransferase, catalyzing the first and committed reaction in the de novo synthesis of glycerophospholipids and triacylglycerols (TAGs). Can use both Gly-3-P and dihydroxyacetone phosphate with similar efficiencies and has a broad fatty acyl-CoA specificity profile. Transfers a fatty acid from fatty acyl-CoA to the sn-1 position of glycerol-3-phosphate to produce lysophosphatidic acid (LysoPA). These lipids not only are precursors of glycerolipids, but also are dynamic components of signal transduction systems that control cell physiology. The sequence is that of Glycerol-3-phosphate O-acyltransferase 2 (GPT2) from Saccharomyces cerevisiae (strain ATCC 204508 / S288c) (Baker's yeast).